The following is a 148-amino-acid chain: MASLLSPSMPVLAAVALTLTLAVIPEASTNAEAKQVVLGGVEPADPKDKEVQKVVKFAVRTYNDMDNDLYLSKPIRLMSASQQVVAGKNYYLKIELGRTTCTKTESNLVDCPFNEQPDQQKRVICNFQINVAPWLNKMSMTNFNCYNF.

The signal sequence occupies residues 1 to 33 (MASLLSPSMPVLAAVALTLTLAVIPEASTNAEA). The Cystatin kininogen-type domain maps to 36–148 (VVLGGVEPAD…SMTNFNCYNF (113 aa)). Intrachain disulfides connect Cys-101-Cys-111 and Cys-125-Cys-145.

It belongs to the cystatin family. In cartilage, expressed mainly in mature chondrocytes including prehypertrophic and hypertrophic cells (at protein level). Expressed exclusively in cartilage.

The protein resides in the cytoplasm. Its subcellular location is the cytosol. May play a role in the last steps of the chondrocyte differentiation pathway as an inducer of maturation. Induces chondrocyte calcification during endochondral ossification by playing a role in the transcriptional inhibition of ENPP1, a generator of pyrophosphate which inhibits calcification. Possibly impairs the binding of a transcription factor to the ENPP1 promoter. Unlike other cystatins, does not have thiol protease inhibitor activity. This is Cystatin-D from Mus musculus (Mouse).